A 95-amino-acid polypeptide reads, in one-letter code: Histone-like DNA-binding protein (95 aa).

It belongs to the bacterial histone-like protein family.

The chain is Histone-like DNA-binding protein from Rickettsia conorii (strain ATCC VR-613 / Malish 7).